The following is a 243-amino-acid chain: 2-C-methyl-D-erythritol 4-phosphate cytidylyltransferase (243 aa).

This sequence belongs to the IspD/TarI cytidylyltransferase family. IspD subfamily.

The enzyme catalyses 2-C-methyl-D-erythritol 4-phosphate + CTP + H(+) = 4-CDP-2-C-methyl-D-erythritol + diphosphate. It participates in isoprenoid biosynthesis; isopentenyl diphosphate biosynthesis via DXP pathway; isopentenyl diphosphate from 1-deoxy-D-xylulose 5-phosphate: step 2/6. In terms of biological role, catalyzes the formation of 4-diphosphocytidyl-2-C-methyl-D-erythritol from CTP and 2-C-methyl-D-erythritol 4-phosphate (MEP). This Rhodopirellula baltica (strain DSM 10527 / NCIMB 13988 / SH1) protein is 2-C-methyl-D-erythritol 4-phosphate cytidylyltransferase.